A 561-amino-acid polypeptide reads, in one-letter code: Nucleoprotein (561 aa).

Positions 52-237 (VRKDKRTDSD…ISHEPSALNI (186 aa)) are binding site for the cap structure m7GTP. The interval 336–355 (SKPSAIQPPVRNGGSPDLKQ) is disordered. Mn(2+)-binding residues include D380 and E382. E390, C497, H500, and C521 together coordinate Zn(2+). D525 is a Mn(2+) binding site.

This sequence belongs to the arenaviridae nucleocapsid protein family. As to quaternary structure, homomultimerizes to form the nucleocapsid. Binds to viral genomic RNA. Interacts with glycoprotein G2. Interacts with protein Z; this interaction probably directs the encapsidated genome to budding sites. Interacts with protein L; this interaction does not interfere with Z-L interaction. Interacts with host IKBKE (via Protein kinase domain); the interaction inhibits IKBKE kinase activity.

It localises to the virion. Its subcellular location is the host cytoplasm. Functionally, encapsidates the genome, protecting it from nucleases. The encapsidated genomic RNA is termed the nucleocapsid (NC). Serves as template for viral transcription and replication. The increased presence of protein N in host cell does not seem to trigger the switch from transcription to replication as observed in other negative strain RNA viruses. Through the interaction with host IKBKE, strongly inhibits the phosphorylation and nuclear translocation of host IRF3, a protein involved in interferon activation pathway, leading to the inhibition of interferon-beta and IRF3-dependent promoters activation. Also encodes a functional 3'-5' exoribonuclease that degrades preferentially dsRNA substrates and thereby participates in the suppression of interferon induction. The protein is Nucleoprotein of Cavia cutleri (Guinea pig).